A 62-amino-acid chain; its full sequence is Sperm protamine P1 (62 aa).

Residues methionine 1 to tyrosine 62 are disordered.

It belongs to the protamine P1 family. In terms of tissue distribution, testis.

Its subcellular location is the nucleus. The protein resides in the chromosome. Functionally, protamines substitute for histones in the chromatin of sperm during the haploid phase of spermatogenesis. They compact sperm DNA into a highly condensed, stable and inactive complex. In Planigale maculata sinualis (Common planigale), this protein is Sperm protamine P1 (PRM1).